The primary structure comprises 144 residues: MQAGVENLVEQVVSGLGYELVDFELSPKGRLLRVFIDIERGVTVDDCATVSNQLTRVFEVENVDYDRLEVSSPGLDRPLKKLADFERFAGQEIQLRLSLPIGNQRNFVGVLQGVRESSVVLLTEKGELLAPFEEIEKARLVPKF.

It belongs to the RimP family.

The protein localises to the cytoplasm. Its function is as follows. Required for maturation of 30S ribosomal subunits. This Azoarcus sp. (strain BH72) protein is Ribosome maturation factor RimP.